Here is a 788-residue protein sequence, read N- to C-terminus: Protein translocase subunit SecA 2 (788 aa).

ATP-binding positions include Q77, 95-99, and D491; that span reads GEGKT.

Belongs to the SecA family. In terms of assembly, monomer and homodimer. Part of the essential Sec protein translocation apparatus which comprises SecA, SecYEG and auxiliary proteins SecDF. Other proteins may also be involved.

It is found in the cell membrane. Its subcellular location is the cytoplasm. It carries out the reaction ATP + H2O + cellular proteinSide 1 = ADP + phosphate + cellular proteinSide 2.. Functionally, part of the Sec protein translocase complex. Interacts with the SecYEG preprotein conducting channel. Has a central role in coupling the hydrolysis of ATP to the transfer of proteins into and across the cell membrane, serving as an ATP-driven molecular motor driving the stepwise translocation of polypeptide chains across the membrane. The polypeptide is Protein translocase subunit SecA 2 (Lactobacillus johnsonii (strain CNCM I-12250 / La1 / NCC 533)).